A 223-amino-acid polypeptide reads, in one-letter code: GrpE protein homolog, mitochondrial (223 aa).

Belongs to the GrpE family. Component of the PAM complex, at least composed of mtHsp70, mge1, tim44, pam16, pam17 and pam18.

It is found in the mitochondrion matrix. Its function is as follows. Essential component of the PAM complex, a complex required for the translocation of transit peptide-containing proteins from the inner membrane into the mitochondrial matrix in an ATP-dependent manner. Seems to control the nucleotide-dependent binding of ssc1 to substrate proteins. This Schizosaccharomyces pombe (strain 972 / ATCC 24843) (Fission yeast) protein is GrpE protein homolog, mitochondrial (mge1).